Reading from the N-terminus, the 96-residue chain is Protein RnfH (96 aa).

This sequence belongs to the UPF0125 (RnfH) family.

The protein is Protein RnfH of Citrobacter koseri (strain ATCC BAA-895 / CDC 4225-83 / SGSC4696).